The following is a 223-amino-acid chain: Cytidylate kinase (223 aa).

Residue 12-20 (GPAGSGKST) participates in ATP binding.

The protein belongs to the cytidylate kinase family. Type 1 subfamily.

It localises to the cytoplasm. The catalysed reaction is CMP + ATP = CDP + ADP. It carries out the reaction dCMP + ATP = dCDP + ADP. This chain is Cytidylate kinase, found in Onion yellows phytoplasma (strain OY-M).